The primary structure comprises 1114 residues: Mediator of RNA polymerase II transcription subunit 14 (1114 aa).

Disordered stretches follow at residues 1 to 27 (MPGVVMDNANIGGLRHGPGNTYPQDGL), 40 to 79 (ANAQDGPVHVNGVEKNASQSRSVEAIPSNHASRVTKGPPE), and 120 to 141 (HGIHPSTAPTTGKSPGNQSPGN). A compositionally biased stretch (polar residues) spans 126-140 (TAPTTGKSPGNQSPG).

It belongs to the Mediator complex subunit 14 family. As to quaternary structure, component of the Mediator complex.

It is found in the nucleus. Functionally, component of the Mediator complex, a coactivator involved in the regulated transcription of nearly all RNA polymerase II-dependent genes. Mediator functions as a bridge to convey information from gene-specific regulatory proteins to the basal RNA polymerase II transcription machinery. Mediator is recruited to promoters by direct interactions with regulatory proteins and serves as a scaffold for the assembly of a functional preinitiation complex with RNA polymerase II and the general transcription factors. The sequence is that of Mediator of RNA polymerase II transcription subunit 14 (rgr1) from Aspergillus niger (strain ATCC MYA-4892 / CBS 513.88 / FGSC A1513).